We begin with the raw amino-acid sequence, 121 residues long: Large ribosomal subunit protein uL14 (121 aa).

This sequence belongs to the universal ribosomal protein uL14 family. As to quaternary structure, part of the 50S ribosomal subunit. Forms a cluster with proteins L3 and L19. In the 70S ribosome, L14 and L19 interact and together make contacts with the 16S rRNA in bridges B5 and B8.

Its function is as follows. Binds to 23S rRNA. Forms part of two intersubunit bridges in the 70S ribosome. The sequence is that of Large ribosomal subunit protein uL14 from Prochlorococcus marinus (strain MIT 9515).